A 447-amino-acid chain; its full sequence is Argininosuccinate synthase (447 aa).

ATP is bound by residues 17 to 25 (AFSGGLDTS) and alanine 43. Tyrosine 99 lines the L-citrulline pocket. Residues glycine 129 and threonine 131 each contribute to the ATP site. Residues threonine 131, asparagine 135, and aspartate 136 each coordinate L-aspartate. Residue asparagine 135 participates in L-citrulline binding. Aspartate 136 contributes to the ATP binding site. L-citrulline contacts are provided by arginine 139 and serine 192. ATP is bound at residue aspartate 194. Residues threonine 201, glutamate 203, and glutamate 280 each coordinate L-citrulline.

Belongs to the argininosuccinate synthase family. Type 2 subfamily. In terms of assembly, homotetramer.

It is found in the cytoplasm. It catalyses the reaction L-citrulline + L-aspartate + ATP = 2-(N(omega)-L-arginino)succinate + AMP + diphosphate + H(+). It participates in amino-acid biosynthesis; L-arginine biosynthesis; L-arginine from L-ornithine and carbamoyl phosphate: step 2/3. This is Argininosuccinate synthase from Shigella flexneri serotype 5b (strain 8401).